Consider the following 428-residue polypeptide: Enolase (428 aa).

(2R)-2-phosphoglycerate is bound at residue glutamine 163. Glutamate 205 serves as the catalytic Proton donor. Residues aspartate 242, glutamate 283, and aspartate 310 each coordinate Mg(2+). 4 residues coordinate (2R)-2-phosphoglycerate: lysine 335, arginine 364, serine 365, and lysine 386. Lysine 335 serves as the catalytic Proton acceptor.

Belongs to the enolase family. It depends on Mg(2+) as a cofactor.

It localises to the cytoplasm. It is found in the secreted. Its subcellular location is the cell surface. It catalyses the reaction (2R)-2-phosphoglycerate = phosphoenolpyruvate + H2O. The protein operates within carbohydrate degradation; glycolysis; pyruvate from D-glyceraldehyde 3-phosphate: step 4/5. Functionally, catalyzes the reversible conversion of 2-phosphoglycerate (2-PG) into phosphoenolpyruvate (PEP). It is essential for the degradation of carbohydrates via glycolysis. This Saccharopolyspora erythraea (strain ATCC 11635 / DSM 40517 / JCM 4748 / NBRC 13426 / NCIMB 8594 / NRRL 2338) protein is Enolase.